A 410-amino-acid chain; its full sequence is Histidine--tRNA ligase (410 aa).

Belongs to the class-II aminoacyl-tRNA synthetase family.

The protein localises to the cytoplasm. It catalyses the reaction tRNA(His) + L-histidine + ATP = L-histidyl-tRNA(His) + AMP + diphosphate + H(+). This is Histidine--tRNA ligase from Methanoculleus marisnigri (strain ATCC 35101 / DSM 1498 / JR1).